A 560-amino-acid chain; its full sequence is NAD(P)H-quinone oxidoreductase chain 4-3 (560 aa).

The next 14 helical transmembrane spans lie at 5–25 (FPWL…IPLL), 35–55 (WYAL…FWHH), 86–106 (ISMP…LAAW), 114–134 (LFYF…VAQD), 135–155 (LLLF…LVSI), 168–188 (FLLY…AMAL), 208–228 (ALEL…LAIF), 242–262 (SAPV…YGLI), 273–293 (HIYF…YGGL), 310–330 (VSHM…GVSG), 331–351 (AMLQ…LAGV), 374–394 (VFAL…MSGF), 417–437 (VMVF…LSML), and 488–508 (VFIA…PKIA).

Belongs to the complex I subunit 4 family.

The protein resides in the cellular thylakoid membrane. The catalysed reaction is a plastoquinone + NADH + (n+1) H(+)(in) = a plastoquinol + NAD(+) + n H(+)(out). It carries out the reaction a plastoquinone + NADPH + (n+1) H(+)(in) = a plastoquinol + NADP(+) + n H(+)(out). NDH-1 shuttles electrons from NAD(P)H, via FMN and iron-sulfur (Fe-S) centers, to quinones in the respiratory chain. The immediate electron acceptor for the enzyme in this species is believed to be plastoquinone. Couples the redox reaction to proton translocation (for every two electrons transferred, four hydrogen ions are translocated across the cytoplasmic membrane), and thus conserves the redox energy in a proton gradient. The polypeptide is NAD(P)H-quinone oxidoreductase chain 4-3 (ndhD3) (Nostoc sp. (strain PCC 7120 / SAG 25.82 / UTEX 2576)).